The following is a 368-amino-acid chain: D-alanine--D-alanine ligase (368 aa).

Residues 151 to 358 form the ATP-grasp domain; that stretch reads KKLLAAEGLP…YGTLVSTLVD (208 aa). 179–234 serves as a coordination point for ATP; sequence KSRLHLPVFVKPARGGSSIGITRVAEWAALDDAIAHARLHDPKVIVESGIIGREVE. Mg(2+)-binding residues include Asp313, Glu325, and Asn327.

Belongs to the D-alanine--D-alanine ligase family. Mg(2+) serves as cofactor. Mn(2+) is required as a cofactor.

The protein localises to the cytoplasm. It carries out the reaction 2 D-alanine + ATP = D-alanyl-D-alanine + ADP + phosphate + H(+). The protein operates within cell wall biogenesis; peptidoglycan biosynthesis. Its function is as follows. Cell wall formation. This Rhodococcus jostii (strain RHA1) protein is D-alanine--D-alanine ligase.